The primary structure comprises 607 residues: Putative pentatricopeptide repeat-containing protein At1g09680 (607 aa).

9 PPR repeats span residues 239-273, 274-308, 309-343, 344-378, 379-413, 414-448, 449-483, 484-518, and 519-553; these read NVYV…SLQP, TVVS…RTRP, DVFT…GLIP, NDVI…GLQP, DIVL…GLRP, DKIT…GIEL, DRVG…GIKP, DDVT…GHVP, and SVVT…GVVP.

The protein belongs to the PPR family. P subfamily.

This is Putative pentatricopeptide repeat-containing protein At1g09680 from Arabidopsis thaliana (Mouse-ear cress).